We begin with the raw amino-acid sequence, 195 residues long: uncharacterized protein (195 aa).

2 disordered regions span residues 1 to 51 (MTHN…GPSY) and 160 to 195 (SYSQ…KSCN). Positions 13–28 (SYQNQAPQPQYYTRQP) are enriched in polar residues. Residues 170–189 (YYKKHKHHSHHRPKHVKSSR) show a composition bias toward basic residues.

This is an uncharacterized protein from Acanthamoeba polyphaga mimivirus (APMV).